Consider the following 279-residue polypeptide: 3-methyl-2-oxobutanoate hydroxymethyltransferase (279 aa).

The Mg(2+) site is built by Asp-43 and Asp-82. 3-methyl-2-oxobutanoate is bound by residues 43-44, Asp-82, and Lys-112; that span reads DS. Glu-114 is a binding site for Mg(2+). Glu-181 functions as the Proton acceptor in the catalytic mechanism.

The protein belongs to the PanB family. Homodecamer; pentamer of dimers. Mg(2+) serves as cofactor.

The protein localises to the cytoplasm. The enzyme catalyses 3-methyl-2-oxobutanoate + (6R)-5,10-methylene-5,6,7,8-tetrahydrofolate + H2O = 2-dehydropantoate + (6S)-5,6,7,8-tetrahydrofolate. It functions in the pathway cofactor biosynthesis; (R)-pantothenate biosynthesis; (R)-pantoate from 3-methyl-2-oxobutanoate: step 1/2. Functionally, catalyzes the reversible reaction in which hydroxymethyl group from 5,10-methylenetetrahydrofolate is transferred onto alpha-ketoisovalerate to form ketopantoate. The polypeptide is 3-methyl-2-oxobutanoate hydroxymethyltransferase (Halalkalibacterium halodurans (strain ATCC BAA-125 / DSM 18197 / FERM 7344 / JCM 9153 / C-125) (Bacillus halodurans)).